A 208-amino-acid polypeptide reads, in one-letter code: GTP-binding protein Rho1 (208 aa).

19 to 26 is a binding site for GTP; it reads GDGACGKT. The Effector region signature appears at 41–49; sequence YVPTVFDNY. GTP-binding positions include 66-70 and 124-127; these read DTAGQ and CKAD. Residues 188–208 form a disordered region; sequence GKQGKSKPKTKSSKKKKCVVL. Basic residues predominate over residues 191–208; sequence GKSKPKTKSSKKKKCVVL. Cysteine 205 is subject to Cysteine methyl ester. Cysteine 205 carries the S-geranylgeranyl cysteine lipid modification. Residues 206 to 208 constitute a propeptide, removed in mature form; it reads VVL.

This sequence belongs to the small GTPase superfamily. Rho family.

It is found in the cell membrane. The sequence is that of GTP-binding protein Rho1 (RHO1) from Kluyveromyces lactis (strain ATCC 8585 / CBS 2359 / DSM 70799 / NBRC 1267 / NRRL Y-1140 / WM37) (Yeast).